We begin with the raw amino-acid sequence, 461 residues long: Pup--protein ligase (461 aa).

Glu-9 is a Mg(2+) binding site. Arg-53 is an ATP binding site. Tyr-55 contacts Mg(2+). Asp-57 serves as the catalytic Proton acceptor. Glu-63 is a Mg(2+) binding site. Residues Thr-66 and Trp-420 each contribute to the ATP site.

This sequence belongs to the Pup ligase/Pup deamidase family. Pup-conjugating enzyme subfamily.

The enzyme catalyses ATP + [prokaryotic ubiquitin-like protein]-L-glutamate + [protein]-L-lysine = ADP + phosphate + N(6)-([prokaryotic ubiquitin-like protein]-gamma-L-glutamyl)-[protein]-L-lysine.. Its pathway is protein degradation; proteasomal Pup-dependent pathway. The protein operates within protein modification; protein pupylation. Functionally, catalyzes the covalent attachment of the prokaryotic ubiquitin-like protein modifier Pup to the proteasomal substrate proteins, thereby targeting them for proteasomal degradation. This tagging system is termed pupylation. The ligation reaction involves the side-chain carboxylate of the C-terminal glutamate of Pup and the side-chain amino group of a substrate lysine. This Renibacterium salmoninarum (strain ATCC 33209 / DSM 20767 / JCM 11484 / NBRC 15589 / NCIMB 2235) protein is Pup--protein ligase.